A 64-amino-acid chain; its full sequence is Probable cytochrome c oxidase subunit 5C-1 (64 aa).

Residues 15 to 34 (SVVKELFIGLALGLAAGGLW) traverse the membrane as a helical segment.

It belongs to the cytochrome c oxidase subunit 5C family.

The protein resides in the mitochondrion inner membrane. Its function is as follows. This protein is one of the nuclear-coded polypeptide chains of cytochrome c oxidase, the terminal oxidase in mitochondrial electron transport. In Arabidopsis thaliana (Mouse-ear cress), this protein is Probable cytochrome c oxidase subunit 5C-1.